Here is an 89-residue protein sequence, read N- to C-terminus: Dynein light chain 1, cytoplasmic (89 aa).

Lysine 36 carries the post-translational modification N6-acetyllysine. Lysine 43 participates in a covalent cross-link: Glycyl lysine isopeptide (Lys-Gly) (interchain with G-Cter in SUMO2). The segment at threonine 67–glycine 89 is interaction with ESR1. Phosphoserine is present on serine 88.

Belongs to the dynein light chain family. In terms of assembly, homodimer. Monomer; the monomeric form is incapable of binding to target proteins. The cytoplasmic dynein 1 complex consists of two catalytic heavy chains (HCs) and a number of non-catalytic subunits presented by intermediate chains (ICs), light intermediate chains (LICs) and light chains (LCs); the composition seems to vary in respect to the IC, LIC and LC composition. The heavy chain homodimer serves as a scaffold for the probable homodimeric assembly of the respective non-catalytic subunits. The ICs and LICs bind directly to the HC dimer and the LCs assemble on the IC dimer. Interacts with TXNDC17. Interacts with WWC1 and ESR1. The WWC1-DYNLL1 interaction is mandatory for the recruitment and transactivation functions of ESR1 or DYNLL1 to the target chromatin. Interacts with BCL2L11. Interacts with BCL2; the interaction is greatly enhanced in the nucleus and in mitochondria upon induction of apoptosis. Interacts with PAK1; the interaction requires dimeric DYNLL1. Interacts with MYZAP. Part of an astrin (SPAG5)-kinastrin (SKAP) complex containing KNSTRN, SPAG5, PLK1, DYNLL1 and SGO2. Interacts with ATMIN; this interaction inhibits ATMIN transcriptional activity and hence may play a role in a feedback loop whereby DYNLL1 inhibits transactivation of its own promoter by ATMIN. Interacts with NEK9 (not phosphorylated at 'Ser-944'). Interacts with BICD2. Interacts with BCAS1. Interacts with Basson/BSN. Interacts with HDAC6. Interacts with TPPP. Interacts with AMBRA1 (via TQT motifs); tethering AMBRA1 to the cytoskeleton. Interacts with FAM83D/CHICA (via C-terminus). Interacts with HMMR, SPAG5/Astrin and KNSTRN/Kinastrin. Interacts with TLK2. Interacts with NOS1. Interacts with WWC1, WWC2 and WWC3. Interacts with MRE11; inhibiting MRE11 homodimerization and activity. (Microbial infection) Interacts with bovine immunodeficiency virus Gag protein; this interaction is critical for intracellular microtubule-dependent viral genome transport. In terms of processing, phosphorylation at Ser-88 promotes recruitment to DNA double-strand breaks (DSBs) by TP53BP1 and ability to inhibit MRE11.

Its subcellular location is the cytoplasm. It localises to the cytoskeleton. It is found in the microtubule organizing center. The protein resides in the centrosome. The protein localises to the chromosome. Its subcellular location is the nucleus. It localises to the mitochondrion. In terms of biological role, acts as one of several non-catalytic accessory components of the cytoplasmic dynein 1 complex that are thought to be involved in linking dynein to cargos and to adapter proteins that regulate dynein function. Cytoplasmic dynein 1 acts as a motor for the intracellular retrograde motility of vesicles and organelles along microtubules. May play a role in changing or maintaining the spatial distribution of cytoskeletal structures. In addition to its role in cytoskeleton and transport, acts as a protein-protein adapter, which inhibits and/or sequesters target proteins. Involved in the response to DNA damage by acting as a key regulator of DNA end resection: when phosphorylated at Ser-88, recruited to DNA double-strand breaks (DSBs) by TP53BP1 and acts by disrupting MRE11 dimerization, thereby inhibiting DNA end resection. In a subset of DSBs, DYNLL1 remains unphosphorylated and promotes the recruitment of the Shieldin complex. Binds and inhibits the catalytic activity of neuronal nitric oxide synthase/NOS1. Promotes transactivation functions of ESR1 and plays a role in the nuclear localization of ESR1. Regulates apoptotic activities of BCL2L11 by sequestering it to microtubules. Upon apoptotic stimuli the BCL2L11-DYNLL1 complex dissociates from cytoplasmic dynein and translocates to mitochondria and sequesters BCL2 thus neutralizing its antiapoptotic activity. The chain is Dynein light chain 1, cytoplasmic (DYNLL1) from Bos taurus (Bovine).